Here is a 206-residue protein sequence, read N- to C-terminus: Guanylate kinase (206 aa).

The Guanylate kinase-like domain maps to 3–183 (GNLYILSAPS…ALTELKSILT (181 aa)). 10–17 (APSGAGKS) contributes to the ATP binding site.

The protein belongs to the guanylate kinase family.

Its subcellular location is the cytoplasm. The catalysed reaction is GMP + ATP = GDP + ADP. Functionally, essential for recycling GMP and indirectly, cGMP. The protein is Guanylate kinase of Haemophilus ducreyi (strain 35000HP / ATCC 700724).